A 247-amino-acid chain; its full sequence is Uridylate kinase (247 aa).

17 to 20 (KFSG) contributes to the ATP binding site. UMP is bound at residue G59. Residues G60 and R64 each coordinate ATP. UMP-binding positions include D79 and 140–147 (TGNPFFTT). The ATP site is built by T167, Y173, and D176.

This sequence belongs to the UMP kinase family. Homohexamer.

The protein localises to the cytoplasm. It catalyses the reaction UMP + ATP = UDP + ADP. Its pathway is pyrimidine metabolism; CTP biosynthesis via de novo pathway; UDP from UMP (UMPK route): step 1/1. Its activity is regulated as follows. Inhibited by UTP. Its function is as follows. Catalyzes the reversible phosphorylation of UMP to UDP. The chain is Uridylate kinase from Legionella pneumophila (strain Lens).